The sequence spans 341 residues: uncharacterized protein (341 aa).

4 WD repeats span residues 19–59 (SLGS…QVHT), 106–145 (GHTDIVSSIEVSPIEDQFVSTANDKTLKLWKMNQSSRCLG), 252–293 (PFSN…HHKG), and 303–341 (VSQSIINPGLVKYNPRYDQLLTAGSQLVFWLPEKYALTS).

It localises to the cytoplasm. The protein localises to the nucleus. This is an uncharacterized protein from Schizosaccharomyces pombe (strain 972 / ATCC 24843) (Fission yeast).